Reading from the N-terminus, the 233-residue chain is MTELDAQKIIDFIANSKKQTAVKVTYKGHLNGRIPTSIQNFSNSDFGILYGDWSDIKPLLSGLNKKDYLIENNARNSAVPLLNIKDINARIEPGAIIRDQVKIADNAVIMMGAVINIGAEIGEATMIDMGAVLGGRAIVGKHSHIGAGAVLAGVVEPASAQPVRVGDNVLIGANAVIIEGVQIGDGAVVGAGAVVINDVPAHTVVAGVPAKVIKQIDEKTENKTALIDALRSL.

It belongs to the transferase hexapeptide repeat family. DapH subfamily.

The enzyme catalyses (S)-2,3,4,5-tetrahydrodipicolinate + acetyl-CoA + H2O = L-2-acetamido-6-oxoheptanedioate + CoA. Its pathway is amino-acid biosynthesis; L-lysine biosynthesis via DAP pathway; LL-2,6-diaminopimelate from (S)-tetrahydrodipicolinate (acetylase route): step 1/3. Catalyzes the transfer of an acetyl group from acetyl-CoA to tetrahydrodipicolinate. This chain is 2,3,4,5-tetrahydropyridine-2,6-dicarboxylate N-acetyltransferase, found in Oenococcus oeni (strain ATCC BAA-331 / PSU-1).